A 384-amino-acid polypeptide reads, in one-letter code: Gastrin-releasing peptide receptor (384 aa).

Residues 1–39 (MDPNNCSHLNLEVDPFLSCNNTFNQTLNPPKMDNWFHPG) are Extracellular-facing. Residues Asn-5, Asn-20, and Asn-24 are each glycosylated (N-linked (GlcNAc...) asparagine). Residues 40-63 (IIYVIPAVYGLIIVIGLIGNITLI) form a helical membrane-spanning segment. At 64-77 (KIFCTVKSMRNVPN) the chain is on the cytoplasmic side. Residues 78 to 97 (LFISSLALGDLLLLVTCAPV) form a helical membrane-spanning segment. The Extracellular portion of the chain corresponds to 98 to 115 (DASKYLADRWLFGRIGCK). Cys-114 and Cys-197 form a disulfide bridge. The helical transmembrane segment at 116-137 (LIPFIQLTSVGVSVFTLTALSA) threads the bilayer. Topologically, residues 138–153 (DRYKAIVRPMDIQASH) are cytoplasmic. The helical transmembrane segment at 154–175 (ALMKICLKAALIWIVSMLLAIP) threads the bilayer. The Extracellular segment spans residues 176 to 209 (EAVFSDLHPFHVKDTNQTFISCAPYPHSNELHPK). Residues 210–235 (IHSMASFLVFYIIPLSIISVYYYFIA) form a helical membrane-spanning segment. At 236 to 265 (RNLIQSAYNLPVEGNIHVKKQIESRKRLAK) the chain is on the cytoplasmic side. A helical membrane pass occupies residues 266–286 (TVLVFVGLFAFCWLPNHVIYL). At 287–299 (YRSYHYSEVDTSM) the chain is on the extracellular side. A helical transmembrane segment spans residues 300–326 (LHFITSICARLLAFTNSCVNPFALYLL). The Cytoplasmic segment spans residues 327–384 (SKSFRKQFNTQLLCCQPSLLNRSHSTGRSTTCMTSFKSTNPSATFSLINGNICHEGYV). Cys-340 carries S-palmitoyl cysteine lipidation. At Ser-351 the chain carries Phosphoserine.

This sequence belongs to the G-protein coupled receptor 1 family. Expressed in the hippocampal CA1 region (at protein level).

Its subcellular location is the cell membrane. Functionally, receptor for gastrin-releasing peptide (GRP). Signals via association with G proteins that activate a phosphatidylinositol-calcium second messenger system, resulting in Akt phosphorylation. Contributes to the regulation of food intake. Contributes to the perception of prurient stimuli and transmission of itch signals in the spinal cord that promote scratching behavior, but does not play a role in the perception of pain. Contributes primarily to nonhistaminergic itch sensation. In one study, shown to act in the amygdala as part of an inhibitory network which inhibits memory specifically related to learned fear. In another study, shown to contribute to disinhibition of glutamatergic cells in the auditory cortex via signaling on vasoactive intestinal peptide-expressing cells which leads to enhanced auditory fear memories. Contributes to the induction of sighing through signaling in the pre-Botzinger complex, a cluster of several thousand neurons in the ventrolateral medulla responsible for inspiration during respiratory activity. The polypeptide is Gastrin-releasing peptide receptor (Grpr) (Rattus norvegicus (Rat)).